We begin with the raw amino-acid sequence, 534 residues long: Cytochrome c oxidase subunit 1 (534 aa).

The Mitochondrial matrix segment spans residues 1 to 14; that stretch reads MVQRWLYSTNAKDI. A helical transmembrane segment spans residues 15 to 39; it reads AVLYFMLAIFSGMAGTAMSLIIRLE. Residues Glu39, Ala42, and Gly44 each contribute to the Ca(2+) site. Residues 40–54 are Mitochondrial intermembrane-facing; that stretch reads LAAPGSQYLHGNSQL. The chain crosses the membrane as a helical span at residues 55–88; sequence FNVLVVGHAVLMIFFLVMPALIGGFGNYLLPLMI. Fe(II)-heme a is bound at residue His62. The Mitochondrial matrix portion of the chain corresponds to 89–97; that stretch reads GATDTAFPR. The helical transmembrane segment at 98–118 threads the bilayer; the sequence is INNIAFWVLPMGLVCLVTSTL. Residues 119–142 are Mitochondrial intermembrane-facing; the sequence is VESGAGTGWTVYPPLSSIQAHSGP. The helical transmembrane segment at 143–171 threads the bilayer; it reads SVDLAIFALHLTSISSLLGAINFIVTTLN. Residues 172–183 lie on the Mitochondrial matrix side of the membrane; the sequence is MRTNGMTMHKLP. A helical transmembrane segment spans residues 184 to 215; the sequence is LFVWSIFITAFLLLLSLPVLSAGITMLLLDRN. At 216 to 228 the chain is on the mitochondrial intermembrane side; sequence FNTSFFEVSGGGD. Residues 229-263 traverse the membrane as a helical segment; sequence PILYEHLFWFFGHPEVYILIIPGFGIISHVVSTYS. His241 contacts Cu cation. Residues 241–245 constitute a cross-link (1'-histidyl-3'-tyrosine (His-Tyr)); the sequence is HPEVY. Residue Tyr245 participates in O2 binding. The Mitochondrial matrix portion of the chain corresponds to 264–269; the sequence is KKPVFG. The chain crosses the membrane as a helical span at residues 270-295; that stretch reads EISMVYAMASIGLLGFLVWSHHMYIV. Cu cation is bound by residues His290 and His291. The Mitochondrial intermembrane portion of the chain corresponds to 296–298; the sequence is GLD. A helical transmembrane segment spans residues 299–327; that stretch reads ADTRAYFTSATMIIAIPTGIKIFSWLATI. The Mitochondrial matrix portion of the chain corresponds to 328–335; that stretch reads HGGSIRLA. A helical transmembrane segment spans residues 336-358; sequence TPMLYAIAFLFLFTMGGLTGVAL. Residues 359–370 lie on the Mitochondrial intermembrane side of the membrane; that stretch reads ANASLDVAFHDT. Mg(2+) contacts are provided by His368 and Asp369. Residues 371-400 form a helical membrane-spanning segment; sequence YYVVGHFHYVLSMGAIFSLFAGYYYWSPQI. Heme a3 is bound at residue His376. His378 is a binding site for Fe(II)-heme a. The Mitochondrial matrix portion of the chain corresponds to 401–406; sequence LGLNYN. The helical transmembrane segment at 407-431 threads the bilayer; that stretch reads EKLAQIQFWLIFIGANVIFFPMHFL. The Mitochondrial intermembrane segment spans residues 432-449; it reads GINGMPRRIPDYPDAFAG. A Ca(2+)-binding site is contributed by Pro441. Residues 450–474 form a helical membrane-spanning segment; the sequence is WNYVASIGSFIATLSLFLFIYILYD. The Mitochondrial matrix segment spans residues 475–534; sequence QLVNGLNNKVNNKSVIYNKAPDFVESNTIFNLNTVKSSSIEFLLTSPPAVHSFNTPAVQS.

This sequence belongs to the heme-copper respiratory oxidase family. As to quaternary structure, component of the cytochrome c oxidase (complex IV, CIV), a multisubunit enzyme composed of 12 subunits. The complex is composed of a catalytic core of 3 subunits COX1, COX2 and COX3, encoded in the mitochondrial DNA, and 9 supernumerary subunits COX4, COX5A (or COX5B), COX6, COX7, COX8, COX9, COX12, COX13 and COX26, which are encoded in the nuclear genome. The complex exists as a monomer or a dimer and forms supercomplexes (SCs) in the inner mitochondrial membrane with a dimer of ubiquinol-cytochrome c oxidoreductase (cytochrome b-c1 complex, complex III, CIII), resulting in 2 different assemblies (supercomplexes III(2)IV and III(2)IV(2)). Heme is required as a cofactor. Requires Cu cation as cofactor. The N-terminus is blocked.

The protein resides in the mitochondrion inner membrane. It catalyses the reaction 4 Fe(II)-[cytochrome c] + O2 + 8 H(+)(in) = 4 Fe(III)-[cytochrome c] + 2 H2O + 4 H(+)(out). It functions in the pathway energy metabolism; oxidative phosphorylation. Its function is as follows. Component of the cytochrome c oxidase, the last enzyme in the mitochondrial electron transport chain which drives oxidative phosphorylation. The respiratory chain contains 3 multisubunit complexes succinate dehydrogenase (complex II, CII), ubiquinol-cytochrome c oxidoreductase (cytochrome b-c1 complex, complex III, CIII) and cytochrome c oxidase (complex IV, CIV), that cooperate to transfer electrons derived from NADH and succinate to molecular oxygen, creating an electrochemical gradient over the inner membrane that drives transmembrane transport and the ATP synthase. Cytochrome c oxidase is the component of the respiratory chain that catalyzes the reduction of oxygen to water. Electrons originating from reduced cytochrome c in the intermembrane space (IMS) are transferred via the dinuclear copper A center (CU(A)) of COX2 and heme A of COX1 to the active site in COX1, a binuclear center (BNC) formed by heme A3 and copper B (CU(B)). The BNC reduces molecular oxygen to 2 water molecules using 4 electrons from cytochrome c in the IMS and 4 protons from the mitochondrial matrix. COX1 is a catalytic core subunit containing heme A and the active site BNC with heme A3 and the copper atom CU(B). This Saccharomyces cerevisiae (strain ATCC 204508 / S288c) (Baker's yeast) protein is Cytochrome c oxidase subunit 1 (COX1).